Consider the following 337-residue polypeptide: Holliday junction branch migration complex subunit RuvB (337 aa).

Positions 4-186 are large ATPase domain (RuvB-L); that stretch reads ADRLIHPQII…FGIPLRLEFY (183 aa). ATP-binding positions include Arg26, Gly67, Lys70, Thr71, Thr72, 133–135, Arg176, Tyr186, and Arg223; that span reads EDY. Position 71 (Thr71) interacts with Mg(2+). Residues 187-257 are small ATPAse domain (RuvB-S); that stretch reads NVKDLSSIVA…IAEAALDMLD (71 aa). A head domain (RuvB-H) region spans residues 260–337; the sequence is AEGFDYMDRK…NHFNIIKPDA (78 aa). Residues Arg296, Arg315, and Arg320 each contribute to the DNA site.

It belongs to the RuvB family. In terms of assembly, homohexamer. Forms an RuvA(8)-RuvB(12)-Holliday junction (HJ) complex. HJ DNA is sandwiched between 2 RuvA tetramers; dsDNA enters through RuvA and exits via RuvB. An RuvB hexamer assembles on each DNA strand where it exits the tetramer. Each RuvB hexamer is contacted by two RuvA subunits (via domain III) on 2 adjacent RuvB subunits; this complex drives branch migration. In the full resolvosome a probable DNA-RuvA(4)-RuvB(12)-RuvC(2) complex forms which resolves the HJ.

The protein resides in the cytoplasm. The enzyme catalyses ATP + H2O = ADP + phosphate + H(+). In terms of biological role, the RuvA-RuvB-RuvC complex processes Holliday junction (HJ) DNA during genetic recombination and DNA repair, while the RuvA-RuvB complex plays an important role in the rescue of blocked DNA replication forks via replication fork reversal (RFR). RuvA specifically binds to HJ cruciform DNA, conferring on it an open structure. The RuvB hexamer acts as an ATP-dependent pump, pulling dsDNA into and through the RuvAB complex. RuvB forms 2 homohexamers on either side of HJ DNA bound by 1 or 2 RuvA tetramers; 4 subunits per hexamer contact DNA at a time. Coordinated motions by a converter formed by DNA-disengaged RuvB subunits stimulates ATP hydrolysis and nucleotide exchange. Immobilization of the converter enables RuvB to convert the ATP-contained energy into a lever motion, pulling 2 nucleotides of DNA out of the RuvA tetramer per ATP hydrolyzed, thus driving DNA branch migration. The RuvB motors rotate together with the DNA substrate, which together with the progressing nucleotide cycle form the mechanistic basis for DNA recombination by continuous HJ branch migration. Branch migration allows RuvC to scan DNA until it finds its consensus sequence, where it cleaves and resolves cruciform DNA. In Shewanella halifaxensis (strain HAW-EB4), this protein is Holliday junction branch migration complex subunit RuvB.